Consider the following 313-residue polypeptide: MIKRKKIALIGAGNIGGMIAYLIRLKNLGDVVLLDVNDGIAKGKALDMAESSPVGKYNGEILGTNNYADIEGADAIVVTAGITRKPGMSREDLINTNVNIIKEVADNIGKYAPNAFVVVVTNPLDVMVFAMHKYSKLSSNMVVGMAGILDSARFSYFIAKELNVSVDNVNSLVLGGHGDLMLPLVKYSSVAGISIADLIKIDLITQDKVDAIIERTRKGGEEIVSLLKIGSAYYAPAESALLMIDSYLNDRRLILPCSVYLKGEYGVSNLFVGVPVIIGRNGVEKIIELELTEQEKNIFDNSVKLIKNLVSNV.

NAD(+) contacts are provided by residues G11 to G16 and D35. Substrate-binding residues include R84 and R90. Residues N97 and V120–N122 contribute to the NAD(+) site. Substrate contacts are provided by N122 and R153. H177 (proton acceptor) is an active-site residue.

It belongs to the LDH/MDH superfamily. MDH type 3 family.

It carries out the reaction (S)-malate + NAD(+) = oxaloacetate + NADH + H(+). Its function is as follows. Catalyzes the reversible oxidation of malate to oxaloacetate. This chain is Malate dehydrogenase, found in Ehrlichia canis (strain Jake).